The sequence spans 273 residues: 2,3,4,5-tetrahydropyridine-2,6-dicarboxylate N-succinyltransferase (273 aa).

Positions 104 and 141 each coordinate substrate.

The protein belongs to the transferase hexapeptide repeat family. As to quaternary structure, homotrimer.

The protein resides in the cytoplasm. The enzyme catalyses (S)-2,3,4,5-tetrahydrodipicolinate + succinyl-CoA + H2O = (S)-2-succinylamino-6-oxoheptanedioate + CoA. Its pathway is amino-acid biosynthesis; L-lysine biosynthesis via DAP pathway; LL-2,6-diaminopimelate from (S)-tetrahydrodipicolinate (succinylase route): step 1/3. This chain is 2,3,4,5-tetrahydropyridine-2,6-dicarboxylate N-succinyltransferase, found in Psychrobacter arcticus (strain DSM 17307 / VKM B-2377 / 273-4).